The following is a 283-amino-acid chain: Pantothenate synthetase (283 aa).

An ATP-binding site is contributed by 30–37 (MGALHRGH). His37 acts as the Proton donor in catalysis. Gln61 provides a ligand contact to (R)-pantoate. Gln61 is a binding site for beta-alanine. Residue 147-150 (GQKD) coordinates ATP. Gln153 serves as a coordination point for (R)-pantoate. ATP-binding positions include Ile176 and 184–187 (MSSR).

This sequence belongs to the pantothenate synthetase family. Homodimer.

It localises to the cytoplasm. It carries out the reaction (R)-pantoate + beta-alanine + ATP = (R)-pantothenate + AMP + diphosphate + H(+). The protein operates within cofactor biosynthesis; (R)-pantothenate biosynthesis; (R)-pantothenate from (R)-pantoate and beta-alanine: step 1/1. In terms of biological role, catalyzes the condensation of pantoate with beta-alanine in an ATP-dependent reaction via a pantoyl-adenylate intermediate. The sequence is that of Pantothenate synthetase from Cytophaga hutchinsonii (strain ATCC 33406 / DSM 1761 / CIP 103989 / NBRC 15051 / NCIMB 9469 / D465).